The chain runs to 227 residues: Cytochrome c oxidase subunit 2 (227 aa).

The Mitochondrial intermembrane portion of the chain corresponds to 1–14 (MAYPFQLGLQDATS). A helical membrane pass occupies residues 15 to 45 (PIMEELLHFHDHTLMIVFLISSLVLYIITLM). The Mitochondrial matrix segment spans residues 46-59 (LTTKLTHTSTMDAQ). A helical transmembrane segment spans residues 60–87 (EVETVWTILPAIILILIALPSLRILYMM). Over 88–227 (DEINNPSLTV…YFETWSAVMV (140 aa)) the chain is Mitochondrial intermembrane. Cu cation-binding residues include His161, Cys196, Glu198, Cys200, His204, and Met207. Mg(2+) is bound at residue Glu198. Tyr218 is subject to Phosphotyrosine.

This sequence belongs to the cytochrome c oxidase subunit 2 family. In terms of assembly, component of the cytochrome c oxidase (complex IV, CIV), a multisubunit enzyme composed of 14 subunits. The complex is composed of a catalytic core of 3 subunits MT-CO1, MT-CO2 and MT-CO3, encoded in the mitochondrial DNA, and 11 supernumerary subunits COX4I, COX5A, COX5B, COX6A, COX6B, COX6C, COX7A, COX7B, COX7C, COX8 and NDUFA4, which are encoded in the nuclear genome. The complex exists as a monomer or a dimer and forms supercomplexes (SCs) in the inner mitochondrial membrane with NADH-ubiquinone oxidoreductase (complex I, CI) and ubiquinol-cytochrome c oxidoreductase (cytochrome b-c1 complex, complex III, CIII), resulting in different assemblies (supercomplex SCI(1)III(2)IV(1) and megacomplex MCI(2)III(2)IV(2)). Found in a complex with TMEM177, COA6, COX18, COX20, SCO1 and SCO2. Interacts with TMEM177 in a COX20-dependent manner. Interacts with COX20. Interacts with COX16. The cofactor is Cu cation.

Its subcellular location is the mitochondrion inner membrane. It catalyses the reaction 4 Fe(II)-[cytochrome c] + O2 + 8 H(+)(in) = 4 Fe(III)-[cytochrome c] + 2 H2O + 4 H(+)(out). In terms of biological role, component of the cytochrome c oxidase, the last enzyme in the mitochondrial electron transport chain which drives oxidative phosphorylation. The respiratory chain contains 3 multisubunit complexes succinate dehydrogenase (complex II, CII), ubiquinol-cytochrome c oxidoreductase (cytochrome b-c1 complex, complex III, CIII) and cytochrome c oxidase (complex IV, CIV), that cooperate to transfer electrons derived from NADH and succinate to molecular oxygen, creating an electrochemical gradient over the inner membrane that drives transmembrane transport and the ATP synthase. Cytochrome c oxidase is the component of the respiratory chain that catalyzes the reduction of oxygen to water. Electrons originating from reduced cytochrome c in the intermembrane space (IMS) are transferred via the dinuclear copper A center (CU(A)) of subunit 2 and heme A of subunit 1 to the active site in subunit 1, a binuclear center (BNC) formed by heme A3 and copper B (CU(B)). The BNC reduces molecular oxygen to 2 water molecules using 4 electrons from cytochrome c in the IMS and 4 protons from the mitochondrial matrix. This Vulpes vulpes (Red fox) protein is Cytochrome c oxidase subunit 2 (MT-CO2).